A 704-amino-acid chain; its full sequence is Polyribonucleotide nucleotidyltransferase (704 aa).

Aspartate 487 and aspartate 493 together coordinate Mg(2+). The KH domain maps to 554–613 (PRLLTIKIHPDKIREVIGKGGSTIQAITKETGTQIDIQDDGTIIIASVNAIAAQAAKSRI). The 69-residue stretch at 623–691 (GRIYEGKVAK…KQGRIRLSIK (69 aa)) folds into the S1 motif domain.

The protein belongs to the polyribonucleotide nucleotidyltransferase family. Component of the RNA degradosome, which is a multiprotein complex involved in RNA processing and mRNA degradation. It depends on Mg(2+) as a cofactor.

Its subcellular location is the cytoplasm. The catalysed reaction is RNA(n+1) + phosphate = RNA(n) + a ribonucleoside 5'-diphosphate. Functionally, involved in mRNA degradation. Catalyzes the phosphorolysis of single-stranded polyribonucleotides processively in the 3'- to 5'-direction. This chain is Polyribonucleotide nucleotidyltransferase, found in Xanthomonas axonopodis pv. citri (strain 306).